The chain runs to 282 residues: NADPH-dependent 7-cyano-7-deazaguanine reductase (282 aa).

88-90 (IES) lines the substrate pocket. An NADPH-binding site is contributed by 90–91 (SK). The Thioimide intermediate role is filled by cysteine 190. The active-site Proton donor is the aspartate 197. 229–230 (HE) is a binding site for substrate. 258 to 259 (RG) is an NADPH binding site.

The protein belongs to the GTP cyclohydrolase I family. QueF type 2 subfamily. Homodimer.

It localises to the cytoplasm. It catalyses the reaction 7-aminomethyl-7-carbaguanine + 2 NADP(+) = 7-cyano-7-deazaguanine + 2 NADPH + 3 H(+). The protein operates within tRNA modification; tRNA-queuosine biosynthesis. Its function is as follows. Catalyzes the NADPH-dependent reduction of 7-cyano-7-deazaguanine (preQ0) to 7-aminomethyl-7-deazaguanine (preQ1). The chain is NADPH-dependent 7-cyano-7-deazaguanine reductase from Salmonella heidelberg (strain SL476).